The sequence spans 298 residues: Tyrosine recombinase XerC (298 aa).

The Core-binding (CB) domain occupies 1–84 (MNHIQEAFLN…TLRTLYEYWM (84 aa)). One can recognise a Tyr recombinase domain in the interval 105–286 (YLPQFSLEEE…SNQQLRKVYL (182 aa)). Active-site residues include Arg-145, Lys-169, His-238, Arg-241, and His-264. Tyr-273 (O-(3'-phospho-DNA)-tyrosine intermediate) is an active-site residue.

It belongs to the 'phage' integrase family. XerC subfamily. Forms a cyclic heterotetrameric complex composed of two molecules of XerC and two molecules of XerD.

It is found in the cytoplasm. Site-specific tyrosine recombinase, which acts by catalyzing the cutting and rejoining of the recombining DNA molecules. The XerC-XerD complex is essential to convert dimers of the bacterial chromosome into monomers to permit their segregation at cell division. It also contributes to the segregational stability of plasmids. This chain is Tyrosine recombinase XerC, found in Staphylococcus aureus.